The following is a 308-amino-acid chain: UDP-N-acetylenolpyruvoylglucosamine reductase (308 aa).

The region spanning 32-196 (VGGPAARLYK…ISAKLQLSPG (165 aa)) is the FAD-binding PCMH-type domain. Residue Arg176 is part of the active site. Ser225 (proton donor) is an active-site residue. Glu296 is a catalytic residue.

Belongs to the MurB family. FAD serves as cofactor.

Its subcellular location is the cytoplasm. The catalysed reaction is UDP-N-acetyl-alpha-D-muramate + NADP(+) = UDP-N-acetyl-3-O-(1-carboxyvinyl)-alpha-D-glucosamine + NADPH + H(+). The protein operates within cell wall biogenesis; peptidoglycan biosynthesis. Functionally, cell wall formation. In Legionella pneumophila subsp. pneumophila (strain Philadelphia 1 / ATCC 33152 / DSM 7513), this protein is UDP-N-acetylenolpyruvoylglucosamine reductase.